The primary structure comprises 577 residues: Proline--tRNA ligase (577 aa).

It belongs to the class-II aminoacyl-tRNA synthetase family. ProS type 1 subfamily. As to quaternary structure, homodimer.

It is found in the cytoplasm. The enzyme catalyses tRNA(Pro) + L-proline + ATP = L-prolyl-tRNA(Pro) + AMP + diphosphate. Its function is as follows. Catalyzes the attachment of proline to tRNA(Pro) in a two-step reaction: proline is first activated by ATP to form Pro-AMP and then transferred to the acceptor end of tRNA(Pro). As ProRS can inadvertently accommodate and process non-cognate amino acids such as alanine and cysteine, to avoid such errors it has two additional distinct editing activities against alanine. One activity is designated as 'pretransfer' editing and involves the tRNA(Pro)-independent hydrolysis of activated Ala-AMP. The other activity is designated 'posttransfer' editing and involves deacylation of mischarged Ala-tRNA(Pro). The misacylated Cys-tRNA(Pro) is not edited by ProRS. This is Proline--tRNA ligase from Thermotoga sp. (strain RQ2).